The chain runs to 125 residues: Large ribosomal subunit protein bL12 (125 aa).

This sequence belongs to the bacterial ribosomal protein bL12 family. Homodimer. Part of the ribosomal stalk of the 50S ribosomal subunit. Forms a multimeric L10(L12)X complex, where L10 forms an elongated spine to which 2 to 4 L12 dimers bind in a sequential fashion. Binds GTP-bound translation factors.

Functionally, forms part of the ribosomal stalk which helps the ribosome interact with GTP-bound translation factors. Is thus essential for accurate translation. In Gluconacetobacter diazotrophicus (strain ATCC 49037 / DSM 5601 / CCUG 37298 / CIP 103539 / LMG 7603 / PAl5), this protein is Large ribosomal subunit protein bL12.